The chain runs to 157 residues: Glutathione peroxidase homolog BsaA (157 aa).

Residue cysteine 35 is part of the active site.

It belongs to the glutathione peroxidase family.

This Halalkalibacterium halodurans (strain ATCC BAA-125 / DSM 18197 / FERM 7344 / JCM 9153 / C-125) (Bacillus halodurans) protein is Glutathione peroxidase homolog BsaA (bsaA).